A 271-amino-acid chain; its full sequence is uncharacterized protein (271 aa).

In terms of domain architecture, DOD-type homing endonuclease spans 77–205; that stretch reads IIGVYFGDAN…SKELLKKLDV (129 aa).

This is an uncharacterized protein from Methanocaldococcus jannaschii (strain ATCC 43067 / DSM 2661 / JAL-1 / JCM 10045 / NBRC 100440) (Methanococcus jannaschii).